Reading from the N-terminus, the 257-residue chain is Fructose-2,6-bisphosphatase TIGAR B (257 aa).

The active-site Tele-phosphohistidine intermediate is the His11. Glu89 acts as the Proton donor/acceptor in catalysis.

This sequence belongs to the phosphoglycerate mutase family.

Its subcellular location is the cytoplasm. It localises to the nucleus. The protein resides in the mitochondrion. The enzyme catalyses beta-D-fructose 2,6-bisphosphate + H2O = beta-D-fructose 6-phosphate + phosphate. Functionally, fructose-bisphosphatase hydrolyzing fructose-2,6-bisphosphate as well as fructose-1,6-bisphosphate. Acts as a negative regulator of glycolysis by lowering intracellular levels of fructose-2,6-bisphosphate in a p53/TP53-dependent manner, resulting in the pentose phosphate pathway (PPP) activation and NADPH production. Contributes to the generation of reduced glutathione to cause a decrease in intracellular reactive oxygen species (ROS) content, correlating with its ability to protect cells from oxidative or metabolic stress-induced cell death. May play a role in mitophagy inhibition. This Danio rerio (Zebrafish) protein is Fructose-2,6-bisphosphatase TIGAR B.